The sequence spans 253 residues: Large ribosomal subunit protein bL28m (253 aa).

The N-terminal 55 residues, 1-55, are a transit peptide targeting the mitochondrion; it reads MPLHKYPPALWDVLKLKDGIYARLPEHYRRSLLEKHKPYPVHWKPHGLKYRLNPK.

This sequence belongs to the bacterial ribosomal protein bL28 family. In terms of assembly, component of the mitochondrial ribosome large subunit (39S) which comprises a 16S rRNA and about 50 distinct proteins.

The protein resides in the mitochondrion. The protein is Large ribosomal subunit protein bL28m (mrpl28) of Xenopus laevis (African clawed frog).